The following is a 460-amino-acid chain: Lipase member H-B (460 aa).

The N-terminal stretch at 1-26 is a signal peptide; sequence MLLSFYFNGLLLVGCLLSWGRSDTEG. Residues Asn67 and Asn75 are each glycosylated (N-linked (GlcNAc...) asparagine). Catalysis depends on Ser163, which acts as the Nucleophile. Asn177 carries an N-linked (GlcNAc...) asparagine glycan. Catalysis depends on Asp187, which acts as the Charge relay system. Cys242 and Cys255 form a disulfide bridge. Residue His257 is the Charge relay system of the active site. 2 cysteine pairs are disulfide-bonded: Cys279-Cys290 and Cys293-Cys301. Residue Asn289 is glycosylated (N-linked (GlcNAc...) asparagine). Asn366 carries an N-linked (GlcNAc...) asparagine glycan. Cys436 and Cys455 form a disulfide bridge.

The protein belongs to the AB hydrolase superfamily. Lipase family.

Its subcellular location is the secreted. It localises to the cell membrane. It catalyses the reaction 1-hexadecanoyl-2-(9Z-octadecenoyl)-sn-glycero-3-phosphate + H2O = 2-(9Z-octadecenoyl)-sn-glycero-3-phosphate + hexadecanoate + H(+). Its function is as follows. Hydrolyzes specifically phosphatidic acid (PA) to produce 2-acyl lysophosphatidic acid (LPA; a potent bioactive lipid mediator) and fatty acid. Does not hydrolyze other phospholipids, like phosphatidylserine (PS), phosphatidylcholine (PC) and phosphatidylethanolamine (PE) or triacylglycerol (TG). This Xenopus laevis (African clawed frog) protein is Lipase member H-B (liph-b).